A 777-amino-acid chain; its full sequence is Ribosome-releasing factor 2, mitochondrial (777 aa).

The region spanning A68–E353 is the tr-type G domain. GTP contacts are provided by residues A77–T84, D141–H145, and N195–D198.

This sequence belongs to the TRAFAC class translation factor GTPase superfamily. Classic translation factor GTPase family. EF-G/EF-2 subfamily.

The protein localises to the mitochondrion. It catalyses the reaction GTP + H2O = GDP + phosphate + H(+). Functionally, mitochondrial GTPase that mediates the disassembly of ribosomes from messenger RNA at the termination of mitochondrial protein biosynthesis. Acts in collaboration with MRRF. GTP hydrolysis follows the ribosome disassembly and probably occurs on the ribosome large subunit. Not involved in the GTP-dependent ribosomal translocation step during translation elongation. In Bos taurus (Bovine), this protein is Ribosome-releasing factor 2, mitochondrial.